A 548-amino-acid chain; its full sequence is Rop guanine nucleotide exchange factor 1 (548 aa).

Over residues 1–12 the composition is skewed to acidic residues; that stretch reads MGSLSSEEDDEV. The disordered stretch occupies residues 1–38; sequence MGSLSSEEDDEVSSERCGSYSPSADISESESSSSFSCH. Residues 19–36 show a composition bias toward low complexity; it reads SYSPSADISESESSSSFS. Residues 81-462 enclose the PRONE domain; the sequence is DKQPDNDLSE…DAMRRSISVT (382 aa). The segment at 458-548 is involved in auto-inhibition; sequence SISVTESLSL…RVTGVTPERD (91 aa). Residues S460 and S480 each carry the phosphoserine modification.

As to quaternary structure, interacts with ARAC10/ROP11 and FER. Forms a complex with ARAC11/ROP1 and PRK2. Interacts in vitro (via PRONE domain) with PRK1, PRK2, PRK3 and PRK4. The C-terminal region is also important for the interaction with PRK2. Phosphorylated at Ser-460 and Ser-480 by PRK2. Expressed in roots, cotyledons, leaves, stems, sepals, petals, anthers, pollen grains, stigmas and siliques.

The protein localises to the cytoplasm. It is found in the cytosol. It localises to the cell membrane. With respect to regulation, phosphorylation at Ser-460 and Ser-480 by PRK2 releases ROPGEF1 auto-inhibition, thereby activating ROPGEF1, which in turn activates ARAC11/ROP1. Guanine-nucleotide exchange factor (GEF) that acts as an activator of Rop (Rho of plants) GTPases by promoting the exchange of GDP for GTP. Acts downstream of PRK2 in the control of polarized pollen tube growth by activating ARAC11/ROP1. In association with ROPGEF4, acts as a specific regulator of ARAC10/ROP11 function in ABA-mediated stomatal closure. May play a role in the Rac/Rop-signaling pathway that controls ROS-mediated root hair development. This is Rop guanine nucleotide exchange factor 1 (ROPGEF1) from Arabidopsis thaliana (Mouse-ear cress).